Consider the following 807-residue polypeptide: MPKGPKQQPPEPEWIGDGESTSPTDKVVKKGKKDKKTKKTFFEELAVEDRQAGEEEKVLKEKEQQQQHQQQQQKKKRDTRKGRRKKDVDDDDGEEKELMERLKKLSVPASDEEEEAPAPVPRGGKKNKGGNVFAALIQDQSEEEEEEEKHPPKPAKPEKNRINKAVSQEQQPGPKGRKGKEEKSKGKAKPQNKFAALDDEEEQDEEEIKEKEPPKQGKEKAKKAEQMEYERQVASLKAANAAENDFSVSQAEMSSRQAMLENASDIKLEKFSISAHGKELFVNADLYIVAGRRYGLVGPNGKGKTTLLKHIANRALSIPPNIDVLLCEQEVVADETPAVQAVLRADTKRLKLLEEERRLQGQLEQGDDTAADRLEKVYEELRATGAAAAEAKARRILAGLGFDPEMQNRPTQKFSGGWRMRVSLARALFMEPTLLMLDEPTNHLDLNAVIWLNNYLQGWRKTLLIVSHDQGFLDDVCTDIIHLDAQRLHYYRGNYMTFKKMYQQKQKELLKQYEKQEKKLKELKAGGKSTKQAEKQTKEALTRKQQKCRRKNQDEESQEAPELLKRPKEYTVRFTFPDPPPLSPPVLGLHGVTFGYEGQKPLFKNLDFGIDMDSRICIVGPNGVGKSTLLLLLTGKLTPTRGEMRKNHRLKIGFFNQQYAEQLRMEETPTEYLQRGFNLPYQDARKCLGRFGLESHAHTIQICKLSGGQKARVVFAELACREPDVLILDEPTNNLDIESIDALGEAINEYKGAVIVVSHDARLITETNCQLWVVEEQSVSQIDGDFDDYKREVLEALGEVMVSRPRE.

The tract at residues 1 to 227 (MPKGPKQQPP…KEKAKKAEQM (227 aa)) is disordered. Position 22 is a phosphoserine (serine 22). A compositionally biased stretch (basic residues) spans 29 to 39 (KKGKKDKKTKK). Over residues 47–65 (VEDRQAGEEEKVLKEKEQQ) the composition is skewed to basic and acidic residues. Basic residues predominate over residues 73–85 (QKKKRDTRKGRRK). A Phosphoserine modification is found at serine 106. 2 positions are modified to phosphoserine; by CK2: serine 110 and serine 141. Residues 148 to 161 (EKHPPKPAKPEKNR) show a composition bias toward basic and acidic residues. Phosphoserine is present on serine 167. Over residues 197–207 (LDDEEEQDEEE) the composition is skewed to acidic residues. Positions 208-227 (IKEKEPPKQGKEKAKKAEQM) are enriched in basic and acidic residues. The 245-residue stretch at 266-510 (IKLEKFSISA…MYQQKQKELL (245 aa)) folds into the ABC transporter 1 domain. An ATP-binding site is contributed by 298–305 (GPNGKGKT). Residues 521-542 (KELKAGGKSTKQAEKQTKEALT) show a composition bias toward basic and acidic residues. The interval 521–564 (KELKAGGKSTKQAEKQTKEALTRKQQKCRRKNQDEESQEAPELL) is disordered. The residue at position 557 (serine 557) is a Phosphoserine. The 216-residue stretch at 587 to 802 (LGLHGVTFGY…VLEALGEVMV (216 aa)) folds into the ABC transporter 2 domain. 620-627 (GPNGVGKS) is a binding site for ATP.

This sequence belongs to the ABC transporter superfamily. ABCF family. EF3 subfamily. Interacts (via N-terminus) with EIF2S1; the interaction is independent of its phosphorylated status. Associates (via both ABC transporter domains) with the ribosomes. In terms of processing, phosphorylated at phosphoserine and phosphothreonine. Phosphorylation on Ser-110 and Ser-141 by CK2; inhibits association of EIF2 with ribosomes.

It localises to the cytoplasm. The protein localises to the nucleus. The protein resides in the nucleoplasm. Its subcellular location is the nucleus envelope. Required for efficient Cap- and IRES-mediated mRNA translation initiation. Not involved in the ribosome biogenesis. In Sus scrofa (Pig), this protein is ATP-binding cassette sub-family F member 1 (ABCF1).